The sequence spans 88 residues: Small ribosomal subunit protein bS20 (88 aa).

Over residues 1-21 (MANSKSAKKRALQSEKRRQHN) the composition is skewed to basic residues. A disordered region spans residues 1-26 (MANSKSAKKRALQSEKRRQHNASRSS).

Belongs to the bacterial ribosomal protein bS20 family.

Its function is as follows. Binds directly to 16S ribosomal RNA. The sequence is that of Small ribosomal subunit protein bS20 from Shewanella halifaxensis (strain HAW-EB4).